The primary structure comprises 602 residues: Fructan 1-exohydrolase (602 aa).

An N-terminal signal peptide occupies residues 1–19; sequence MAQAWAFLLLPVLLLSSYA. The active site involves Asp81. 3 N-linked (GlcNAc...) asparagine glycosylation sites follow: Asn174, Asn242, and Asn254. An intrachain disulfide couples Cys452 to Cys498.

It belongs to the glycosyl hydrolase 32 family. As to expression, detected in leaves, with maximum levels at the leaf tip.

The enzyme catalyses Hydrolysis of terminal, non-reducing (2-&gt;1)-linked beta-D-fructofuranose residues in fructans.. Its activity is regulated as follows. Inhibited by sucrose. In terms of biological role, hydrolyzes inulin-type beta-(2,1)-fructans. Has low activity against beta-(2,6)-linked fructans. May play a role as a beta-(2,1)-trimmer during graminan biosynthesis. The sequence is that of Fructan 1-exohydrolase from Bromus pictus (Patagonian grass).